Here is a 238-residue protein sequence, read N- to C-terminus: Deoxyribose-phosphate aldolase (238 aa).

Aspartate 102 serves as the catalytic Proton donor/acceptor. Lysine 164 acts as the Schiff-base intermediate with acetaldehyde in catalysis. Lysine 193 acts as the Proton donor/acceptor in catalysis.

Belongs to the DeoC/FbaB aldolase family. DeoC type 1 subfamily.

It localises to the cytoplasm. The enzyme catalyses 2-deoxy-D-ribose 5-phosphate = D-glyceraldehyde 3-phosphate + acetaldehyde. Its pathway is carbohydrate degradation; 2-deoxy-D-ribose 1-phosphate degradation; D-glyceraldehyde 3-phosphate and acetaldehyde from 2-deoxy-alpha-D-ribose 1-phosphate: step 2/2. In terms of biological role, catalyzes a reversible aldol reaction between acetaldehyde and D-glyceraldehyde 3-phosphate to generate 2-deoxy-D-ribose 5-phosphate. This is Deoxyribose-phosphate aldolase from Rhodospirillum rubrum (strain ATCC 11170 / ATH 1.1.1 / DSM 467 / LMG 4362 / NCIMB 8255 / S1).